A 290-amino-acid chain; its full sequence is Fructose-1,6-bisphosphatase class 1 (290 aa).

The Mg(2+) site is built by Glu78, Asp96, Leu98, and Asp99. Substrate-binding positions include 99-102, Tyr201, and Lys226; that span reads DGSS. Glu232 contributes to the Mg(2+) binding site.

Belongs to the FBPase class 1 family. Homotetramer. It depends on Mg(2+) as a cofactor.

It is found in the cytoplasm. The catalysed reaction is beta-D-fructose 1,6-bisphosphate + H2O = beta-D-fructose 6-phosphate + phosphate. It participates in carbohydrate biosynthesis; gluconeogenesis. The protein is Fructose-1,6-bisphosphatase class 1 of Helicobacter pylori (strain G27).